We begin with the raw amino-acid sequence, 172 residues long: Early nodulin-like protein 17 (172 aa).

Residues 1–26 (MARFTVLITAVVLAFLMAAPMPGVTA) form the signal peptide. One can recognise a Phytocyanin domain in the interval 27-127 (KKYTVGENKF…GMKLSVKVEK (101 aa)). N-linked (GlcNAc...) asparagine glycosylation is found at N42, N73, N88, and N101. A disulfide bridge links C80 with C115. A lipid anchor (GPI-anchor amidated glycine) is attached at G141. A propeptide spans 142 to 172 (SVSMVTGLAQFMIPVSLFAFPAMWDVISRMW) (removed in mature form).

This sequence belongs to the early nodulin-like (ENODL) family.

The protein localises to the cell membrane. In terms of biological role, may act as a carbohydrate transporter. This is Early nodulin-like protein 17 from Arabidopsis thaliana (Mouse-ear cress).